Reading from the N-terminus, the 92-residue chain is Small ribosomal subunit protein uS19c (92 aa).

Belongs to the universal ribosomal protein uS19 family.

It is found in the plastid. Its subcellular location is the chloroplast. In terms of biological role, protein S19 forms a complex with S13 that binds strongly to the 16S ribosomal RNA. The sequence is that of Small ribosomal subunit protein uS19c from Eucalyptus globulus subsp. globulus (Tasmanian blue gum).